A 126-amino-acid polypeptide reads, in one-letter code: Major sperm protein 1 (126 aa).

Position 2 is an N-acetylalanine (Ala-2). One can recognise an MSP domain in the interval 8–125 (DIATMPAQKV…RRKNLPIEYN (118 aa)).

In terms of tissue distribution, sperm.

The protein localises to the cell projection. The protein resides in the pseudopodium. It is found in the cytoplasm. Its subcellular location is the cytoskeleton. In terms of biological role, central component in molecular interactions underlying sperm crawling. Forms an extensive filament system that extends from sperm villipoda, along the leading edge of the pseudopod. This is Major sperm protein 1 (MSP-1) from Globodera rostochiensis (Golden nematode worm).